The sequence spans 224 residues: Probable Brix domain-containing ribosomal biogenesis protein (224 aa).

Positions 1 to 196 constitute a Brix domain; the sequence is MMLITTSHRP…IWIMEDGRRW (196 aa).

Probably involved in the biogenesis of the ribosome. The polypeptide is Probable Brix domain-containing ribosomal biogenesis protein (Pyrococcus horikoshii (strain ATCC 700860 / DSM 12428 / JCM 9974 / NBRC 100139 / OT-3)).